The chain runs to 376 residues: MESYDVIANQPVVIDNGSGVIKAGFAGDQIPKYCFPNYVGRPKHVRVMAGALEGDIFIGPKAEEHRGLLSIRYPMEHGIVKDWNDMERIWQYVYSKDQLQTFSEEHPVLLTEAPLNPRKNRERAAEVFFETFNVPALFISMQAVLSLYATGRTTGVVLDSGDGVTHAVPIYEGFAMPHSIMRIDIAGRDVSRFLRLYLRKEGYDFHSSSEFEIVKAIKERACYLSINPQKDETLETEKAQYYLPDGSTIEIGPSRFRAPELLFRPDLIGEESEGIHEVLVFAIQKSDMDLRRTLFSNIVLSGGSTLFKGFGDRLLSEVKKLAPKDVKIRISAPQERLYSTWIGGSILASLDTFKKMWVSKKEYEEDGARSIHRKTF.

At methionine 1 the chain carries N-acetylmethionine.

Belongs to the actin family. ARP1 subfamily. As to quaternary structure, part of the ACTR1A/ACTB filament around which the dynactin complex is built. The filament contains 8 copies of ACTR1A and 1 ACTB. Interacts with dynein and adapters such as BICD2. Interacts with BCCIP (isoform 2/alpha).

The protein resides in the cytoplasm. It localises to the cytoskeleton. It is found in the microtubule organizing center. Its subcellular location is the centrosome. The protein localises to the cell cortex. Functionally, part of the ACTR1A/ACTB filament around which the dynactin complex is built. The dynactin multiprotein complex activates the molecular motor dynein for ultra-processive transport along microtubules. The protein is Alpha-centractin (ACTR1A) of Canis lupus familiaris (Dog).